Consider the following 157-residue polypeptide: Small ribosomal subunit protein uS7 (157 aa).

It belongs to the universal ribosomal protein uS7 family. As to quaternary structure, part of the 30S ribosomal subunit. Contacts proteins S9 and S11.

In terms of biological role, one of the primary rRNA binding proteins, it binds directly to 16S rRNA where it nucleates assembly of the head domain of the 30S subunit. Is located at the subunit interface close to the decoding center, probably blocks exit of the E-site tRNA. In Chlamydia pneumoniae (Chlamydophila pneumoniae), this protein is Small ribosomal subunit protein uS7.